Here is a 334-residue protein sequence, read N- to C-terminus: Holliday junction branch migration complex subunit RuvB (334 aa).

Positions 1–179 are large ATPase domain (RuvB-L); that stretch reads MTHKISVLHQ…FAFTGRVDYY (179 aa). Residues leucine 18, arginine 19, glycine 60, lysine 63, threonine 64, serine 65, 126 to 128, arginine 169, tyrosine 179, and arginine 216 each bind ATP; that span reads EDF. Threonine 64 is a binding site for Mg(2+). Residues 180-250 form a small ATPAse domain (RuvB-S) region; that stretch reads TDEDLVSILS…VAEKALAMLL (71 aa). The head domain (RuvB-H) stretch occupies residues 253–334; it reads NLGLNEIDIK…RNPKDRWGEE (82 aa). Positions 308 and 313 each coordinate DNA.

The protein belongs to the RuvB family. In terms of assembly, homohexamer. Forms an RuvA(8)-RuvB(12)-Holliday junction (HJ) complex. HJ DNA is sandwiched between 2 RuvA tetramers; dsDNA enters through RuvA and exits via RuvB. An RuvB hexamer assembles on each DNA strand where it exits the tetramer. Each RuvB hexamer is contacted by two RuvA subunits (via domain III) on 2 adjacent RuvB subunits; this complex drives branch migration. In the full resolvosome a probable DNA-RuvA(4)-RuvB(12)-RuvC(2) complex forms which resolves the HJ.

Its subcellular location is the cytoplasm. It catalyses the reaction ATP + H2O = ADP + phosphate + H(+). Functionally, the RuvA-RuvB-RuvC complex processes Holliday junction (HJ) DNA during genetic recombination and DNA repair, while the RuvA-RuvB complex plays an important role in the rescue of blocked DNA replication forks via replication fork reversal (RFR). RuvA specifically binds to HJ cruciform DNA, conferring on it an open structure. The RuvB hexamer acts as an ATP-dependent pump, pulling dsDNA into and through the RuvAB complex. RuvB forms 2 homohexamers on either side of HJ DNA bound by 1 or 2 RuvA tetramers; 4 subunits per hexamer contact DNA at a time. Coordinated motions by a converter formed by DNA-disengaged RuvB subunits stimulates ATP hydrolysis and nucleotide exchange. Immobilization of the converter enables RuvB to convert the ATP-contained energy into a lever motion, pulling 2 nucleotides of DNA out of the RuvA tetramer per ATP hydrolyzed, thus driving DNA branch migration. The RuvB motors rotate together with the DNA substrate, which together with the progressing nucleotide cycle form the mechanistic basis for DNA recombination by continuous HJ branch migration. Branch migration allows RuvC to scan DNA until it finds its consensus sequence, where it cleaves and resolves cruciform DNA. The polypeptide is Holliday junction branch migration complex subunit RuvB (Chlamydia trachomatis serovar A (strain ATCC VR-571B / DSM 19440 / HAR-13)).